Reading from the N-terminus, the 151-residue chain is UPF0756 membrane protein HS_0993 (151 aa).

4 helical membrane passes run Met1 to Leu21, Tyr52 to Gly72, Ala81 to Gly101, and Ile123 to Leu143.

Belongs to the UPF0756 family.

It localises to the cell membrane. The sequence is that of UPF0756 membrane protein HS_0993 from Histophilus somni (strain 129Pt) (Haemophilus somnus).